Consider the following 39-residue polypeptide: Conotoxin ArMSGL-013 (39 aa).

The propeptide occupies 1-5; the sequence is RRSLT. 3 disulfide bridges follow: Cys-12-Cys-24, Cys-16-Cys-33, and Cys-23-Cys-37. Tryptophan amide is present on Trp-38.

It belongs to the conotoxin O3 superfamily. In terms of tissue distribution, expressed by the venom duct.

It is found in the secreted. This is Conotoxin ArMSGL-013 from Conus arenatus (Sand-dusted cone).